A 626-amino-acid chain; its full sequence is tRNA uridine 5-carboxymethylaminomethyl modification enzyme MnmG (626 aa).

13–18 (GGGHAG) is an FAD binding site. 273–287 (GPRYCPSIEDKIHRF) contributes to the NAD(+) binding site.

The protein belongs to the MnmG family. In terms of assembly, homodimer. Heterotetramer of two MnmE and two MnmG subunits. FAD serves as cofactor.

Its subcellular location is the cytoplasm. NAD-binding protein involved in the addition of a carboxymethylaminomethyl (cmnm) group at the wobble position (U34) of certain tRNAs, forming tRNA-cmnm(5)s(2)U34. The chain is tRNA uridine 5-carboxymethylaminomethyl modification enzyme MnmG from Acinetobacter baumannii (strain AB307-0294).